The sequence spans 746 residues: Steroid receptor seven-up, isoform A (746 aa).

The segment at 38–191 (PPHSAWHEPP…HSQSSNSGSQ (154 aa)) is disordered. Low complexity predominate over residues 56–68 (AASAGPGTTTGSV). The segment covering 83 to 101 (QQSAVIKQDLSCPSLNQAG) has biased composition (polar residues). Over residues 122–141 (GSAGGHHSGSGSGSGSGVNP) the composition is skewed to gly residues. The span at 158-170 (MLTSIKGQPTGCG) shows a compositional bias: polar residues. Residues 171 to 191 (STTPSSQANSSHSQSSNSGSQ) show a composition bias toward low complexity. Positions 197–272 (NIECVVCGDK…MGMRREAVQR (76 aa)) form a DNA-binding region, nuclear receptor. 2 NR C4-type zinc fingers span residues 200-220 (CVVC…CEGC) and 236-260 (CRGS…LKKC). The region spanning 307-556 (YLSSYISLLL…PLVPSAGSAF (250 aa)) is the NR LBD domain. Positions 579–645 (QATPPSSGGG…APAPVPTSSV (67 aa)) are disordered. A compositionally biased stretch (polar residues) spans 592–605 (GHNNSSGLGASLPT). A compositionally biased stretch (low complexity) spans 606–645 (QSQSGSSSRNLTASPLSTSLATAPAPASASAPAPVPTSSV).

This sequence belongs to the nuclear hormone receptor family. NR2 subfamily. In terms of tissue distribution, expressed in several embryonic tissues; dorsal vessel, oenocyte and fat body. CNS expression is dynamic and confined to temporally restricted subsections of the NB lineage; expressed in many NB and GMCs, but only a small number of neurons.

The protein resides in the nucleus. Functionally, receptor that is required in photoreceptors R1, R3, R4 and R6 during eye development; generation of the ganglion mother cell-2 (GMC-2) fate in the nb7-3 lineage, coinciding with the transition in the expression of HB to KR in the neuroblasts (NBs). The polypeptide is Steroid receptor seven-up, isoform A (svp) (Drosophila melanogaster (Fruit fly)).